Here is a 35-residue protein sequence, read N- to C-terminus: Photosystem II reaction center protein T (35 aa).

A helical transmembrane segment spans residues 3–23 (ALVYTFLLVSTLGIIFFAIFF).

It belongs to the PsbT family. In terms of assembly, PSII is composed of 1 copy each of membrane proteins PsbA, PsbB, PsbC, PsbD, PsbE, PsbF, PsbH, PsbI, PsbJ, PsbK, PsbL, PsbM, PsbT, PsbY, PsbZ, Psb30/Ycf12, at least 3 peripheral proteins of the oxygen-evolving complex and a large number of cofactors. It forms dimeric complexes.

The protein resides in the plastid. The protein localises to the chloroplast thylakoid membrane. Found at the monomer-monomer interface of the photosystem II (PS II) dimer, plays a role in assembly and dimerization of PSII. PSII is a light-driven water plastoquinone oxidoreductase, using light energy to abstract electrons from H(2)O, generating a proton gradient subsequently used for ATP formation. This chain is Photosystem II reaction center protein T, found in Ginkgo biloba (Ginkgo).